We begin with the raw amino-acid sequence, 99 residues long: Bacterial microcompartment shell vertex protein EutN (99 aa).

Positions 5–87 constitute a BMV domain; that stretch reads MKLAVVTGQI…VDLCVIGIVD (83 aa).

It belongs to the CcmL/EutN family. In terms of assembly, homopentamer with a small central pore.

It localises to the bacterial microcompartment. It participates in amine and polyamine degradation; ethanolamine degradation. Its function is as follows. Probably forms vertices in the bacterial microcompartment (BMC) shell dedicated to ethanolamine degradation. Expression of eutK, eutL, eutM, eutN, eutS (eutSMNLK) in E.coli leads to formation of a single BMC. Coexpression of eutQ with eutSMNLK permits E.coli to make cells with more than one mobile BMC, as is usual in vivo. It may be involved in transporting positively charged molecules into and out of the BMC. The ethanolamine (EA) catabolic bacterial microcompartment (BMC) probably concentrates low levels of ethanolamine catabolic enzymes, concentrates volatile reaction intermediates, keeps the level of toxic acetaldehyde low, generates enough acetyl-CoA to support cell growth, and maintains a pool of free coenzyme A (CoA) and NAD. Functionally, expression of the eut operon allows this bacteria to use ethanolamine (EA) as a carbon, nitrogen and energy source. It relies on cobalamin (vitamin B12) both as a cofactor for the ethanolamine ammonia-lyase (EAL) activity and to induce the operon. EA enhances bacterial survival in macrophages in a concentration-dependent manner, suggesting it is an important nutrient during infection. This is Bacterial microcompartment shell vertex protein EutN from Salmonella typhimurium (strain LT2 / SGSC1412 / ATCC 700720).